The primary structure comprises 351 residues: Uroporphyrinogen decarboxylase (351 aa).

Substrate contacts are provided by residues 32–36, Phe-51, Asp-82, Tyr-157, Ser-211, and His-326; that span reads RQAGR.

It belongs to the uroporphyrinogen decarboxylase family. In terms of assembly, homodimer.

It localises to the cytoplasm. The enzyme catalyses uroporphyrinogen III + 4 H(+) = coproporphyrinogen III + 4 CO2. Its pathway is porphyrin-containing compound metabolism; protoporphyrin-IX biosynthesis; coproporphyrinogen-III from 5-aminolevulinate: step 4/4. Its function is as follows. Catalyzes the decarboxylation of four acetate groups of uroporphyrinogen III to yield coproporphyrinogen III. The polypeptide is Uroporphyrinogen decarboxylase (Caulobacter vibrioides (strain ATCC 19089 / CIP 103742 / CB 15) (Caulobacter crescentus)).